Here is a 323-residue protein sequence, read N- to C-terminus: CIMIP2 protein CG18335 (323 aa).

The protein belongs to the CIMIP2 family.

The protein localises to the cytoplasm. Its subcellular location is the cytoskeleton. It is found in the cilium axoneme. Functionally, probable microtubule inner protein (MIP) part of the dynein-decorated doublet microtubules (DMTs) in cilium axoneme. The chain is CIMIP2 protein CG18335 from Drosophila melanogaster (Fruit fly).